The sequence spans 107 residues: Thioredoxin (107 aa).

The Thioredoxin domain occupies S2–I107. An intrachain disulfide couples C32 to C35.

The protein belongs to the thioredoxin family.

Functionally, participates in various redox reactions through the reversible oxidation of its active center dithiol to a disulfide and catalyzes dithiol-disulfide exchange reactions. The sequence is that of Thioredoxin (trxA) from Haemophilus influenzae (strain ATCC 51907 / DSM 11121 / KW20 / Rd).